Consider the following 666-residue polypeptide: 7SK snRNA methylphosphate capping enzyme (666 aa).

An N-acetylmethionine modification is found at methionine 1. Residues 1–10 (MIEMAAEKEP) are compositionally biased toward basic and acidic residues. The segment at 1-141 (MIEMAAEKEP…GSGGSFKHPA (141 aa)) is disordered. Over residues 50-61 (GPGPRAHSAGAA) the composition is skewed to low complexity. Serine 57 is modified (phosphoserine). Arginine 91 carries the post-translational modification Omega-N-methylarginine. Phosphoserine is present on residues serine 126, serine 150, and serine 154. Threonine 188 carries the post-translational modification Phosphothreonine. Phosphoserine occurs at positions 191, 192, and 229. The segment covering 235–244 (RKRHRHRGPH) has biased composition (basic residues). Positions 235–291 (RKRHRHRGPHHQQQQQASGGNDSNAAVLPTDPLTPSLHGEGATQQQQNRGQNRDAPQ) are disordered. The segment covering 245 to 254 (HQQQQQASGG) has biased composition (low complexity). A Phosphothreonine modification is found at threonine 268. Residues serine 307 and serine 321 each carry the phosphoserine modification. Residues 309–337 (LPSALQGSSGSLSAPPAASVTSAPSTSSS) show a composition bias toward low complexity. Residues 309–383 (LPSALQGSSG…HHHPLPATGF (75 aa)) form a disordered region. Residues 338 to 347 (SRHRKRRRTS) show a composition bias toward basic residues. Serine 368 bears the Phosphoserine mark. Residues tyrosine 399, arginine 410, 428-430 (GCN), 451-452 (DI), 536-537 (NY), and phenylalanine 558 contribute to the S-adenosyl-L-methionine site. The Bin3-type SAM domain maps to 408–663 (DVRLRVLKPE…PVYLFHKARS (256 aa)). Lysine 620 is covalently cross-linked (Glycyl lysine isopeptide (Lys-Gly) (interchain with G-Cter in SUMO2)).

This sequence belongs to the methyltransferase superfamily. In terms of assembly, core component of the 7SK RNP complex, at least composed of 7SK RNA, LARP7, MEPCE, HEXIM1 (or HEXIM2) and P-TEFb (composed of CDK9 and CCNT1/cyclin-T1). Interacts with METTL16. Interacts with RBM7; upon genotoxic stress this interaction is enhanced, triggering the release of inactive P-TEFb complex from the core, yielding to P-TEFb complex activation. Post-translationally, dephosphorylated at Ser-126 by the PNUTS-PP1 complex, promoting RNA polymerase II transcription pause-release.

The protein resides in the nucleus. The catalysed reaction is a 5'-end triphospho-guanosine-ribonucleotide-snRNA + S-adenosyl-L-methionine = a 5'-end methyltriphosphate-guanosine-ribonucleotide-snRNA + S-adenosyl-L-homocysteine. Functionally, S-adenosyl-L-methionine-dependent methyltransferase that adds a methylphosphate cap at the 5'-end of 7SK snRNA (7SK RNA), leading to stabilize it. Also has a non-enzymatic function as part of the 7SK RNP complex: the 7SK RNP complex sequesters the positive transcription elongation factor b (P-TEFb) in a large inactive 7SK RNP complex preventing RNA polymerase II phosphorylation and subsequent transcriptional elongation. The 7SK RNP complex also promotes snRNA gene transcription by RNA polymerase II via interaction with the little elongation complex (LEC). In the 7SK RNP complex, MEPCE is required to stabilize 7SK RNA and facilitate the assembly of 7SK RNP complex. MEPCE has a non-enzymatic function in the 7SK RNP complex; it has a non-enzymatic function; interaction with LARP7 within the 7SK RNP complex occluding its catalytic center. Also required for stability of U6 snRNAs. This chain is 7SK snRNA methylphosphate capping enzyme, found in Mus musculus (Mouse).